The following is a 372-amino-acid chain: Aminomethyltransferase (372 aa).

The protein belongs to the GcvT family. In terms of assembly, the glycine cleavage system is composed of four proteins: P, T, L and H.

The enzyme catalyses N(6)-[(R)-S(8)-aminomethyldihydrolipoyl]-L-lysyl-[protein] + (6S)-5,6,7,8-tetrahydrofolate = N(6)-[(R)-dihydrolipoyl]-L-lysyl-[protein] + (6R)-5,10-methylene-5,6,7,8-tetrahydrofolate + NH4(+). Its function is as follows. The glycine cleavage system catalyzes the degradation of glycine. The chain is Aminomethyltransferase from Burkholderia cenocepacia (strain ATCC BAA-245 / DSM 16553 / LMG 16656 / NCTC 13227 / J2315 / CF5610) (Burkholderia cepacia (strain J2315)).